Reading from the N-terminus, the 416-residue chain is Serine hydroxymethyltransferase (416 aa).

Residues leucine 118 and 122-124 (GHL) contribute to the (6S)-5,6,7,8-tetrahydrofolate site. At lysine 226 the chain carries N6-(pyridoxal phosphate)lysine. Residue glutamate 242 coordinates (6S)-5,6,7,8-tetrahydrofolate.

The protein belongs to the SHMT family. Homodimer. Pyridoxal 5'-phosphate serves as cofactor.

It localises to the cytoplasm. The catalysed reaction is (6R)-5,10-methylene-5,6,7,8-tetrahydrofolate + glycine + H2O = (6S)-5,6,7,8-tetrahydrofolate + L-serine. It participates in one-carbon metabolism; tetrahydrofolate interconversion. The protein operates within amino-acid biosynthesis; glycine biosynthesis; glycine from L-serine: step 1/1. Its function is as follows. Catalyzes the reversible interconversion of serine and glycine with tetrahydrofolate (THF) serving as the one-carbon carrier. This reaction serves as the major source of one-carbon groups required for the biosynthesis of purines, thymidylate, methionine, and other important biomolecules. Also exhibits THF-independent aldolase activity toward beta-hydroxyamino acids, producing glycine and aldehydes, via a retro-aldol mechanism. The chain is Serine hydroxymethyltransferase from Helicobacter pylori (strain J99 / ATCC 700824) (Campylobacter pylori J99).